Reading from the N-terminus, the 210-residue chain is RNA binding protein, mRNA processing factor 2 (210 aa).

Residues 1-10 (MSNLKPDVEH) show a composition bias toward basic and acidic residues. The disordered stretch occupies residues 1-25 (MSNLKPDVEHCTGAGTGTGTGPSGP). S2 carries the post-translational modification N-acetylserine. Residues 31-108 (RTLFVSGLPV…QTLRLEFAKA (78 aa)) form the RRM domain. An important for homodimerization region spans residues 41–51 (DIKPRELYLLF).

In terms of assembly, homodimer. Interacts with EEF2.

The protein resides in the cytoplasm. The protein localises to the nucleus. Its subcellular location is the stress granule. Its function is as follows. RNA-binding protein involved in the regulation of smooth muscle cell differentiation and proliferation in the gastrointestinal system. Binds NOG mRNA, the major inhibitor of the bone morphogenetic protein (BMP) pathway. Mediates an increase of NOG mRNA levels, thereby contributing to the negative regulation of BMP signaling pathway and promoting reversible dedifferentiation and proliferation of smooth muscle cells. Acts as a pre-mRNA alternative splicing regulator. Mediates ACTN1 and FLNB alternative splicing. Likely binds to mRNA tandem CAC trinucleotide or CA dinucleotide motifs. The chain is RNA binding protein, mRNA processing factor 2 (Rbpms2) from Rattus norvegicus (Rat).